The following is a 29-amino-acid chain: Galanin (29 aa).

Position 29 is an alanine amide (alanine 29).

It belongs to the galanin family.

Its subcellular location is the secreted. Functionally, contracts smooth muscle of the gastrointestinal and genitourinary tract, regulates growth hormone release, modulates insulin release, and may be involved in the control of adrenal secretion. The polypeptide is Galanin (gal) (Oncorhynchus mykiss (Rainbow trout)).